We begin with the raw amino-acid sequence, 97 residues long: Aspartyl/glutamyl-tRNA(Asn/Gln) amidotransferase subunit C (97 aa).

This sequence belongs to the GatC family. In terms of assembly, heterotrimer of A, B and C subunits.

It catalyses the reaction L-glutamyl-tRNA(Gln) + L-glutamine + ATP + H2O = L-glutaminyl-tRNA(Gln) + L-glutamate + ADP + phosphate + H(+). It carries out the reaction L-aspartyl-tRNA(Asn) + L-glutamine + ATP + H2O = L-asparaginyl-tRNA(Asn) + L-glutamate + ADP + phosphate + 2 H(+). Its function is as follows. Allows the formation of correctly charged Asn-tRNA(Asn) or Gln-tRNA(Gln) through the transamidation of misacylated Asp-tRNA(Asn) or Glu-tRNA(Gln) in organisms which lack either or both of asparaginyl-tRNA or glutaminyl-tRNA synthetases. The reaction takes place in the presence of glutamine and ATP through an activated phospho-Asp-tRNA(Asn) or phospho-Glu-tRNA(Gln). The chain is Aspartyl/glutamyl-tRNA(Asn/Gln) amidotransferase subunit C from Sulfolobus acidocaldarius (strain ATCC 33909 / DSM 639 / JCM 8929 / NBRC 15157 / NCIMB 11770).